A 211-amino-acid chain; its full sequence is Pyridoxine/pyridoxamine 5'-phosphate oxidase (211 aa).

Residues Arg7–Tyr10 and Lys65 each bind substrate. FMN-binding positions include Arg60–Lys65, Tyr75–Thr76, Arg81, Lys82, and Gln104. 3 residues coordinate substrate: Tyr122, Arg126, and Ser130. Residues Gln139–Ser140 and Trp184 each bind FMN. Arg190–His192 is a binding site for substrate. Arg194 contacts FMN.

It belongs to the pyridoxamine 5'-phosphate oxidase family. In terms of assembly, homodimer. FMN is required as a cofactor.

The catalysed reaction is pyridoxamine 5'-phosphate + O2 + H2O = pyridoxal 5'-phosphate + H2O2 + NH4(+). It carries out the reaction pyridoxine 5'-phosphate + O2 = pyridoxal 5'-phosphate + H2O2. Its pathway is cofactor metabolism; pyridoxal 5'-phosphate salvage; pyridoxal 5'-phosphate from pyridoxamine 5'-phosphate: step 1/1. It participates in cofactor metabolism; pyridoxal 5'-phosphate salvage; pyridoxal 5'-phosphate from pyridoxine 5'-phosphate: step 1/1. Functionally, catalyzes the oxidation of either pyridoxine 5'-phosphate (PNP) or pyridoxamine 5'-phosphate (PMP) into pyridoxal 5'-phosphate (PLP). In Vibrio vulnificus (strain CMCP6), this protein is Pyridoxine/pyridoxamine 5'-phosphate oxidase.